The primary structure comprises 329 residues: NADH-quinone oxidoreductase subunit H (329 aa).

Transmembrane regions (helical) follow at residues 9 to 29 (LIKILILVAVFSALGGFATYI), 42 to 62 (GPCYVGPFGLLQVAADGIKLF), 75 to 95 (FIFTLAPIIAMVSAFVSMAPI), 117 to 137 (IGFLFFLAVGAAGIYAPILAG), 154 to 174 (IQLLSFEVVSTLTILAPLMVV), 188 to 208 (GGFLDWLVFKQPLAFVLFLIA), 238 to 258 (LKWGMFFLAEYAHLFAFSFVI), 269 to 291 (WGFIPGGIAILIKAGFFVFLSMW), and 309 to 329 (WKIMLPLALLNIVLTGIIILI).

Belongs to the complex I subunit 1 family. In terms of assembly, NDH-1 is composed of 14 different subunits. Subunits NuoA, H, J, K, L, M, N constitute the membrane sector of the complex.

The protein resides in the cell inner membrane. It carries out the reaction a quinone + NADH + 5 H(+)(in) = a quinol + NAD(+) + 4 H(+)(out). Its function is as follows. NDH-1 shuttles electrons from NADH, via FMN and iron-sulfur (Fe-S) centers, to quinones in the respiratory chain. The immediate electron acceptor for the enzyme in this species is believed to be ubiquinone. Couples the redox reaction to proton translocation (for every two electrons transferred, four hydrogen ions are translocated across the cytoplasmic membrane), and thus conserves the redox energy in a proton gradient. This subunit may bind ubiquinone. This Helicobacter pylori (strain HPAG1) protein is NADH-quinone oxidoreductase subunit H.